The following is a 492-amino-acid chain: Zn(2)-C6 fungal-type transcription factor (492 aa).

The segment at residues 14-41 (CRRCKNRKIKCDEVHPRCGNCAKHGVPC) is a DNA-binding region (zn(2)-C6 fungal-type). Residues 58-119 (TSTESVGAPT…QPSISSSTNT (62 aa)) form a disordered region. Positions 78–95 (SAPRTPLTRPRAPSSPAR) are enriched in low complexity. A Phosphothreonine modification is found at Thr82. Ser92 and Ser102 each carry phosphoserine. The segment covering 107–119 (VYSQPSISSSTNT) has biased composition (polar residues). Phosphothreonine is present on Thr217. Ser305 carries the post-translational modification Phosphoserine.

In terms of assembly, interacts with HOG1. Phosphorylation at Thr-82, Ser-92, Ser-102, thr-117 and ser-305 by HOG1 is required for regulating expression of ergosterol biosynthesis genes.

It localises to the nucleus. In terms of biological role, transcription factor that targets gene promoters containing 2 conserved CGAA repeat sequences. Positively regulates the expression of ergosterol biosynthesis genes including CYP51A and CYP51B encoding the sterol 14-alpha demethylase, and ERG6A and ERG6B encoding the sterol 24-C-methyltransferase. This is Zn(2)-C6 fungal-type transcription factor from Gibberella zeae (strain ATCC MYA-4620 / CBS 123657 / FGSC 9075 / NRRL 31084 / PH-1) (Wheat head blight fungus).